Reading from the N-terminus, the 137-residue chain is Large ribosomal subunit protein uL16 (137 aa).

Belongs to the universal ribosomal protein uL16 family. In terms of assembly, part of the 50S ribosomal subunit.

Binds 23S rRNA and is also seen to make contacts with the A and possibly P site tRNAs. The chain is Large ribosomal subunit protein uL16 from Streptococcus pneumoniae serotype 2 (strain D39 / NCTC 7466).